A 128-amino-acid polypeptide reads, in one-letter code: Large ribosomal subunit protein bL12 (128 aa).

The protein belongs to the bacterial ribosomal protein bL12 family. Homodimer. Part of the ribosomal stalk of the 50S ribosomal subunit. Forms a multimeric L10(L12)X complex, where L10 forms an elongated spine to which 2 to 4 L12 dimers bind in a sequential fashion. Binds GTP-bound translation factors.

Its function is as follows. Forms part of the ribosomal stalk which helps the ribosome interact with GTP-bound translation factors. Is thus essential for accurate translation. This chain is Large ribosomal subunit protein bL12, found in Corynebacterium aurimucosum (strain ATCC 700975 / DSM 44827 / CIP 107346 / CN-1) (Corynebacterium nigricans).